The sequence spans 154 residues: MQSNMQLEPNFWQTKSLLEMTESEWEALCDGCGKCCYRKYIQGRGKRQKLYYTRIACNLLDLETGKCGNYSERFNIETDCTKLTKKNLPDFHWLPDTCAYRLLYEGKTLPEWHPLISGSPHSVKNADILIKNGIHERDVIDWFEFIIDEDHTFK.

This sequence belongs to the UPF0260 family.

This chain is UPF0260 protein HI_1355, found in Haemophilus influenzae (strain ATCC 51907 / DSM 11121 / KW20 / Rd).